Consider the following 109-residue polypeptide: ATP-dependent Clp protease adapter protein ClpS (109 aa).

The protein belongs to the ClpS family. Binds to the N-terminal domain of the chaperone ClpA.

Its function is as follows. Involved in the modulation of the specificity of the ClpAP-mediated ATP-dependent protein degradation. The polypeptide is ATP-dependent Clp protease adapter protein ClpS (Lawsonia intracellularis (strain PHE/MN1-00)).